A 188-amino-acid polypeptide reads, in one-letter code: Methylated-DNA--protein-cysteine methyltransferase (188 aa).

DNA is bound by residues Y120, G121, and R134. The Nucleophile; methyl group acceptor role is filled by C151. S157 provides a ligand contact to DNA.

This sequence belongs to the MGMT family.

It localises to the nucleus. The catalysed reaction is a 6-O-methyl-2'-deoxyguanosine in DNA + L-cysteinyl-[protein] = S-methyl-L-cysteinyl-[protein] + a 2'-deoxyguanosine in DNA. It carries out the reaction a 4-O-methyl-thymidine in DNA + L-cysteinyl-[protein] = a thymidine in DNA + S-methyl-L-cysteinyl-[protein]. Involved in the cellular defense against the biological effects of O6-methylguanine (O6-MeG) and O4-methylthymine (O4-MeT) in DNA. Repairs the methylated nucleobase in DNA by stoichiometrically transferring the methyl group to a cysteine residue in the enzyme. This is a suicide reaction: the enzyme is irreversibly inactivated. Prefers double-stranded DNA over single-stranded DNA as substrate. The polypeptide is Methylated-DNA--protein-cysteine methyltransferase (MGT1) (Saccharomyces cerevisiae (strain YJM789) (Baker's yeast)).